Consider the following 253-residue polypeptide: Ubiquinone/menaquinone biosynthesis C-methyltransferase UbiE (253 aa).

Residues T76, D97, 125–126, and S142 each bind S-adenosyl-L-methionine; that span reads NA.

It belongs to the class I-like SAM-binding methyltransferase superfamily. MenG/UbiE family.

It catalyses the reaction a 2-demethylmenaquinol + S-adenosyl-L-methionine = a menaquinol + S-adenosyl-L-homocysteine + H(+). The enzyme catalyses a 2-methoxy-6-(all-trans-polyprenyl)benzene-1,4-diol + S-adenosyl-L-methionine = a 5-methoxy-2-methyl-3-(all-trans-polyprenyl)benzene-1,4-diol + S-adenosyl-L-homocysteine + H(+). The protein operates within quinol/quinone metabolism; menaquinone biosynthesis; menaquinol from 1,4-dihydroxy-2-naphthoate: step 2/2. It participates in cofactor biosynthesis; ubiquinone biosynthesis. Methyltransferase required for the conversion of demethylmenaquinol (DMKH2) to menaquinol (MKH2) and the conversion of 2-polyprenyl-6-methoxy-1,4-benzoquinol (DDMQH2) to 2-polyprenyl-3-methyl-6-methoxy-1,4-benzoquinol (DMQH2). In Xanthomonas oryzae pv. oryzae (strain MAFF 311018), this protein is Ubiquinone/menaquinone biosynthesis C-methyltransferase UbiE.